A 305-amino-acid chain; its full sequence is D-alanine--D-alanine ligase (305 aa).

An ATP-grasp domain is found at lysine 107–glutamine 299. Proline 134–glutamine 185 contributes to the ATP binding site. Mg(2+)-binding residues include aspartate 253, glutamate 266, and asparagine 268.

It belongs to the D-alanine--D-alanine ligase family. Requires Mg(2+) as cofactor. The cofactor is Mn(2+).

The protein resides in the cytoplasm. The enzyme catalyses 2 D-alanine + ATP = D-alanyl-D-alanine + ADP + phosphate + H(+). It functions in the pathway cell wall biogenesis; peptidoglycan biosynthesis. In terms of biological role, cell wall formation. The polypeptide is D-alanine--D-alanine ligase (Citrifermentans bemidjiense (strain ATCC BAA-1014 / DSM 16622 / JCM 12645 / Bem) (Geobacter bemidjiensis)).